A 1178-amino-acid chain; its full sequence is F-box/WD repeat-containing protein A-like protein (1178 aa).

The region spanning 1 to 208 is the START domain; that stretch reads MQYVNGMDIV…TLPNLIKYIK (208 aa). 3 disordered regions span residues 223-296, 569-594, and 618-649; these read KTPD…NLNE, SLIINSPPNSNNHENEKKRKFRDNGI, and SSSSSSTSSSLTFSPPQQLSSPTSSSSSSTFS. 2 stretches are compositionally biased toward low complexity: residues 229 to 293 and 571 to 580; these read NPNL…SNEN and IINSPPNSNN. In terms of domain architecture, F-box spans 717–763; the sequence is CSLFDLLPYEMIQYIFTLMDATHLIRMSRTCKYFNRICLDDNIWRDL. Positions 804–841 are disordered; it reads KKSNNSSPLSASSSSSSPSPPLLPPPPPPIPQLPDMLL. Positions 809–820 are enriched in low complexity; sequence SSPLSASSSSSS. The segment covering 821-835 has biased composition (pro residues); the sequence is PSPPLLPPPPPPIPQ. WD repeat units follow at residues 886–923, 925–979, 981–1017, 1020–1059, 1062–1100, 1104–1141, and 1146–1178; these read GHKGKISCLQMAPNQIFTGSKDKEFKSWNIATKQCEST, RCGA…IEKE, RFLYVSNGFIFMKRDIYSYESNTVKLYDSETEQELQM, IENTKINHCKIGRFENFCMIACTDKTVKLWDIDSNKTELV, GHKGSVNCLDFLNDYQLITGSSDKTIRMWDIRNPSSAIH, SHSSKVKAISIYNNLRMCTGDEDSICLWNLEGSNEPNL, and NNLSPVECLSIDDETMLAGFSDGEVSYYDFNSK.

Its function is as follows. Substrate recognition component of a SCF (SKP1-CUL1-F-box protein) E3 ubiquitin-protein ligase complex which mediates the ubiquitination and subsequent proteasomal degradation of target proteins. The protein is F-box/WD repeat-containing protein A-like protein of Dictyostelium discoideum (Social amoeba).